A 118-amino-acid chain; its full sequence is V-type proton ATPase subunit G 1 (118 aa).

Ala-2 is modified (N-acetylalanine). Residues 19-42 (AEKVSEARKRKNRRLKQAKEEAQA) are disordered.

This sequence belongs to the V-ATPase G subunit family. As to quaternary structure, V-ATPase is a heteromultimeric enzyme made up of two complexes: the ATP-hydrolytic V1 complex and the proton translocation V0 complex. The V1 complex consists of three catalytic AB heterodimers that form a heterohexamer, three peripheral stalks each consisting of EG heterodimers, one central rotor including subunits D and F, and the regulatory subunits C and H. The proton translocation complex V0 consists of the proton transport subunit a, a ring of proteolipid subunits c9c'', rotary subunit d, subunits e and f, and the accessory subunits ATP6AP1/Ac45 and ATP6AP2/PRR. As to expression, brain, heart, kidney and spleen.

It localises to the apical cell membrane. Functionally, subunit of the V1 complex of vacuolar(H+)-ATPase (V-ATPase), a multisubunit enzyme composed of a peripheral complex (V1) that hydrolyzes ATP and a membrane integral complex (V0) that translocates protons. V-ATPase is responsible for acidifying and maintaining the pH of intracellular compartments and in some cell types, is targeted to the plasma membrane, where it is responsible for acidifying the extracellular environment. In aerobic conditions, involved in intracellular iron homeostasis, thus triggering the activity of Fe(2+) prolyl hydroxylase (PHD) enzymes, and leading to HIF1A hydroxylation and subsequent proteasomal degradation. The sequence is that of V-type proton ATPase subunit G 1 (ATP6V1G1) from Bos taurus (Bovine).